The chain runs to 561 residues: Centromere protein T (561 aa).

The tract at residues 1–78 (MADHNPDGDP…IGRSAHVQAR (78 aa)) is disordered. The span at 18 to 27 (RVLDTADPRT) shows a compositional bias: basic and acidic residues. Residues 45-57 (TASSRRLSGQTKT) are compositionally biased toward polar residues. Serine 47 is subject to Phosphoserine. Residue threonine 85 is modified to Phosphothreonine. Positions 93 to 421 (ILLTAPESSI…RHHQFPEPAP (329 aa)) are flexible stalk domain. Disordered regions lie at residues 114 to 134 (APQVVQPSRRESSRGSLELQL), 256 to 293 (HSLPCTPHTGAEDAEQAAGRRTQSSGPGLQNNSPGKPA), and 314 to 457 (SSGV…DPHK). Residues 276-289 (RTQSSGPGLQNNSP) are compositionally biased toward polar residues. A compositionally biased stretch (basic and acidic residues) spans 329 to 341 (GVEEAEKKMKEEG). Residues serine 343, serine 345, serine 356, serine 373, serine 385, serine 386, and serine 397 each carry the phosphoserine modification. Residues 365-376 (TQVTEAEGSQGT) are compositionally biased toward polar residues. The segment covering 439 to 450 (RCPPRSRTTGPR) has biased composition (low complexity).

It belongs to the CENP-T/CNN1 family. As to quaternary structure, component of the CENPA-CAD complex, composed of CENPI, CENPK, CENPL, CENPO, CENPP, CENPQ, CENPR and CENPS. The CENPA-CAD complex is probably recruited on centromeres by the CENPA-NAC complex, at least composed of CENPA, CENPC, CENPH, CENPM, CENPN, CENPT and CENPU. Identified in a centromeric complex containing histones H2A, H2B, H3 and H4, and at least CENPA, CENPB, CENPC, CENPT, CENPN, HJURP, SUPT16H, SSRP1 and RSF1. Interacts (via N-terminus) with the NDC80 complex. Heterodimer with CENPW; this dimer coassembles with CENPS-CENPX heterodimers at centromeres to form the tetrameric CENP-T-W-S-X complex. Post-translationally, dynamically phosphorylated during the cell cycle. Phosphorylated during G2 phase, metaphase and anaphase, but not during telophase or G1 phase.

It localises to the nucleus. Its subcellular location is the chromosome. The protein localises to the centromere. The protein resides in the kinetochore. Functionally, component of the CENPA-NAC (nucleosome-associated) complex, a complex that plays a central role in assembly of kinetochore proteins, mitotic progression and chromosome segregation. The CENPA-NAC complex recruits the CENPA-CAD (nucleosome distal) complex and may be involved in incorporation of newly synthesized CENPA into centromeres. Part of a nucleosome-associated complex that binds specifically to histone H3-containing nucleosomes at the centromere, as opposed to nucleosomes containing CENPA. Component of the heterotetrameric CENP-T-W-S-X complex that binds and supercoils DNA, and plays an important role in kinetochore assembly. CENPT has a fundamental role in kinetochore assembly and function. It is one of the inner kinetochore proteins, with most further proteins binding downstream. Required for normal chromosome organization and normal progress through mitosis. This is Centromere protein T (CENPT) from Macaca fascicularis (Crab-eating macaque).